Here is a 628-residue protein sequence, read N- to C-terminus: Patulin synthase (628 aa).

The signal sequence occupies residues 1–20 (MRPIPSILGALGAFATLSAA). Residue N48 is glycosylated (N-linked (GlcNAc...) asparagine). Residues 60–61 (TA) and 81–82 (EA) each bind FAD. A glycan (N-linked (GlcNAc...) asparagine) is linked at N92. 147–150 (NYMA) contributes to the FAD binding site. Residues N197, N260, N386, N429, and N486 are each glycosylated (N-linked (GlcNAc...) asparagine). The active-site Proton acceptor is the H564. FAD is bound by residues A598 and 609 to 610 (PQ).

This sequence belongs to the GMC oxidoreductase family. As to quaternary structure, homodimer. It depends on FAD as a cofactor.

The protein resides in the cytoplasm. It localises to the cell cortex. It is found in the vacuole. Its subcellular location is the secreted. The protein localises to the cell wall. The catalysed reaction is (E)-ascladiol + A = patulin + AH2. Its pathway is mycotoxin biosynthesis; patulin biosynthesis. In terms of biological role, patulin synthase; part of the gene cluster that mediates the biosynthesis of patulin, an acetate-derived tetraketide mycotoxin produced by several fungal species that shows antimicrobial properties against several bacteria. PatE catalyzes the last step of the pathway which is the conversion of E-ascladiol to patulin. The pathway begins with the synthesis of 6-methylsalicylic acid by the polyketide synthase (PKS) patK via condensation of acetate and malonate units. The 6-methylsalicylic acid decarboxylase patG then catalyzes the decarboxylation of 6-methylsalicylic acid to yield m-cresol (also known as 3-methylphenol). These first reactions occur in the cytosol. The intermediate m-cresol is then transported into the endoplasmic reticulum where the cytochrome P450 monooxygenase patH converts it to m-hydroxybenzyl alcohol, which is further converted to gentisyl alcohol by the cytochrome P450 monooxygenase patI. The oxidoreductases patJ and patO further convert gentisyl alcohol to isoepoxydon in the vacuole. PatN catalyzes then the transformation of isoepoxydon into phyllostine. The cluster protein patF is responsible for the conversion from phyllostine to neopatulin whereas the alcohol dehydrogenase patD converts neopatulin to E-ascladiol. The steps between isoepoxydon and E-ascladiol occur in the cytosol, and E-ascladiol is probably secreted to the extracellular space by one of the cluster-specific transporters patC or patM. Finally, the secreted patulin synthase patE catalyzes the conversion of E-ascladiol to patulin. This is Patulin synthase from Aspergillus clavatus (strain ATCC 1007 / CBS 513.65 / DSM 816 / NCTC 3887 / NRRL 1 / QM 1276 / 107).